Here is a 199-residue protein sequence, read N- to C-terminus: Tropomyosin-1 (199 aa).

A coiled-coil region spans residues 1 to 199 (MDKIREKLSN…DEIAASLENL (199 aa)). Glycyl lysine isopeptide (Lys-Gly) (interchain with G-Cter in ubiquitin) cross-links involve residues Lys39 and Lys59. 2 disordered regions span residues 59-81 (KLEA…ENQI) and 102-147 (LAES…TEKL). Basic and acidic residues-rich tracts occupy residues 68–80 (KQTE…KENQ) and 102–114 (LAES…DSHH). Polar residues predominate over residues 115 to 126 (LQSNNDNFSKKN). The segment covering 136-147 (SDTKLKETTEKL) has biased composition (basic and acidic residues). Lys187 participates in a covalent cross-link: Glycyl lysine isopeptide (Lys-Gly) (interchain with G-Cter in ubiquitin). Ser195 is subject to Phosphoserine.

Homodimer.

It is found in the cytoplasm. Its subcellular location is the cytoskeleton. The sequence is that of Tropomyosin-1 (TPM1) from Saccharomyces cerevisiae (strain ATCC 204508 / S288c) (Baker's yeast).